The sequence spans 261 residues: uncharacterized protein (261 aa).

A divalent metal cation contacts are provided by His7, His9, Glu96, His132, His156, and Asp211.

Belongs to the metallo-dependent hydrolases superfamily. TatD-type hydrolase family. A divalent metal cation is required as a cofactor.

This is an uncharacterized protein from Mycoplasma pneumoniae (strain ATCC 29342 / M129 / Subtype 1) (Mycoplasmoides pneumoniae).